Reading from the N-terminus, the 204-residue chain is MKNIEDLIQKAVELQNNGLGTGQIADELNVSRETVTWLLTRSKKEVAAPAPKDISVNWSSIGKSATRLHYISLALCDMVIETLEKTNTEVDVVVGVAASGIPLASMMANELGADFALYHSRKGQDMVQPGQKGTISRNFGSVAGKNCVIVDDVITTGSTTMEVIEQLREMDAKPRAVVVLVDKKGADTIANVPIQSLVRIVRVD.

The protein belongs to the purine/pyrimidine phosphoribosyltransferase family. GfcR subfamily.

This is Transcriptional regulator GfcR from Methanosarcina mazei (strain ATCC BAA-159 / DSM 3647 / Goe1 / Go1 / JCM 11833 / OCM 88) (Methanosarcina frisia).